The following is a 281-amino-acid chain: 2,3,4,5-tetrahydropyridine-2,6-dicarboxylate N-succinyltransferase (281 aa).

Substrate is bound by residues arginine 108 and aspartate 145.

It belongs to the transferase hexapeptide repeat family. Homotrimer.

Its subcellular location is the cytoplasm. The enzyme catalyses (S)-2,3,4,5-tetrahydrodipicolinate + succinyl-CoA + H2O = (S)-2-succinylamino-6-oxoheptanedioate + CoA. It functions in the pathway amino-acid biosynthesis; L-lysine biosynthesis via DAP pathway; LL-2,6-diaminopimelate from (S)-tetrahydrodipicolinate (succinylase route): step 1/3. The chain is 2,3,4,5-tetrahydropyridine-2,6-dicarboxylate N-succinyltransferase from Nitrobacter winogradskyi (strain ATCC 25391 / DSM 10237 / CIP 104748 / NCIMB 11846 / Nb-255).